A 216-amino-acid chain; its full sequence is 2',3'-cyclic-nucleotide 3'-phosphodiesterase (216 aa).

Histidine 39 functions as the Proton donor/acceptor in the catalytic mechanism. Threonine 41 is a binding site for substrate. Histidine 137 functions as the Proton donor/acceptor in the catalytic mechanism. The substrate site is built by serine 139 and tyrosine 142.

Belongs to the 2H phosphoesterase superfamily. CPD1 family.

It is found in the golgi apparatus. The catalysed reaction is a nucleoside 2',3'-cyclic phosphate + H2O = a nucleoside 2'-phosphate + H(+). In terms of biological role, involved in the metabolism of ADP-ribose 1',2'-cyclic phosphate which is produced as a consequence of tRNA splicing. The sequence is that of 2',3'-cyclic-nucleotide 3'-phosphodiesterase (CPD1) from Eremothecium gossypii (strain ATCC 10895 / CBS 109.51 / FGSC 9923 / NRRL Y-1056) (Yeast).